A 74-amino-acid polypeptide reads, in one-letter code: Exodeoxyribonuclease 7 small subunit (74 aa).

Belongs to the XseB family. In terms of assembly, heterooligomer composed of large and small subunits.

The protein resides in the cytoplasm. The enzyme catalyses Exonucleolytic cleavage in either 5'- to 3'- or 3'- to 5'-direction to yield nucleoside 5'-phosphates.. Its function is as follows. Bidirectionally degrades single-stranded DNA into large acid-insoluble oligonucleotides, which are then degraded further into small acid-soluble oligonucleotides. In Synechococcus elongatus (strain ATCC 33912 / PCC 7942 / FACHB-805) (Anacystis nidulans R2), this protein is Exodeoxyribonuclease 7 small subunit.